A 264-amino-acid chain; its full sequence is Electron transfer flavoprotein subunit beta (264 aa).

AMP contacts are provided by residues Ala6, 36-39, Val64, 119-122, and 127-130; these read NEWD, GVQS, and YAST.

As to quaternary structure, heterodimer of an alpha and a beta subunit. Forms a ternary complex with trimethylamine dehydrogenase.

Its function is as follows. Heterodimeric electron transfer flavoprotein that accepts electrons from trimethylamine dehydrogenase. It transfers the electrons to the main respiratory chain via ETF-ubiquinone oxidoreductase (ETF dehydrogenase). EtfB binds an AMP molecule that probably has a purely structural role. In Methylophilus methylotrophus (Bacterium W3A1), this protein is Electron transfer flavoprotein subunit beta (etfB).